The primary structure comprises 256 residues: Phosphatidylglycerol--prolipoprotein diacylglyceryl transferase (256 aa).

3 consecutive transmembrane segments (helical) span residues 19–39, 56–76, and 91–111; these read VHWY…LGYW, LIFY…MLFY, and IWEG…AAWL. Arg-139 contributes to the a 1,2-diacyl-sn-glycero-3-phospho-(1'-sn-glycerol) binding site. The helical transmembrane segment at 231–251 threads the bilayer; that stretch reads FGWLTMGQVLSIPMLLIGIWL.

It belongs to the Lgt family.

It localises to the cell inner membrane. The enzyme catalyses L-cysteinyl-[prolipoprotein] + a 1,2-diacyl-sn-glycero-3-phospho-(1'-sn-glycerol) = an S-1,2-diacyl-sn-glyceryl-L-cysteinyl-[prolipoprotein] + sn-glycerol 1-phosphate + H(+). Its pathway is protein modification; lipoprotein biosynthesis (diacylglyceryl transfer). Its function is as follows. Catalyzes the transfer of the diacylglyceryl group from phosphatidylglycerol to the sulfhydryl group of the N-terminal cysteine of a prolipoprotein, the first step in the formation of mature lipoproteins. The chain is Phosphatidylglycerol--prolipoprotein diacylglyceryl transferase from Legionella pneumophila subsp. pneumophila (strain Philadelphia 1 / ATCC 33152 / DSM 7513).